Reading from the N-terminus, the 388-residue chain is Succinate--CoA ligase [ADP-forming] subunit beta (388 aa).

The ATP-grasp domain occupies 9–244; sequence KQLFAEYGLP…PSQDDPREAH (236 aa). ATP-binding positions include K46, 53-55, E99, T102, and E107; that span reads GRG. Mg(2+) contacts are provided by N199 and D213. Substrate-binding positions include N264 and 321-323; that span reads GIV.

Belongs to the succinate/malate CoA ligase beta subunit family. In terms of assembly, heterotetramer of two alpha and two beta subunits. The cofactor is Mg(2+).

It catalyses the reaction succinate + ATP + CoA = succinyl-CoA + ADP + phosphate. It carries out the reaction GTP + succinate + CoA = succinyl-CoA + GDP + phosphate. The protein operates within carbohydrate metabolism; tricarboxylic acid cycle; succinate from succinyl-CoA (ligase route): step 1/1. Succinyl-CoA synthetase functions in the citric acid cycle (TCA), coupling the hydrolysis of succinyl-CoA to the synthesis of either ATP or GTP and thus represents the only step of substrate-level phosphorylation in the TCA. The beta subunit provides nucleotide specificity of the enzyme and binds the substrate succinate, while the binding sites for coenzyme A and phosphate are found in the alpha subunit. The polypeptide is Succinate--CoA ligase [ADP-forming] subunit beta (Pseudomonas fluorescens (strain Pf0-1)).